We begin with the raw amino-acid sequence, 484 residues long: Cobyric acid synthase (484 aa).

One can recognise a GATase cobBQ-type domain in the interval 246 to 437 (ALRVVVPALP…VHGLFDTPAA (192 aa)). C327 functions as the Nucleophile in the catalytic mechanism. Residue H429 is part of the active site.

This sequence belongs to the CobB/CobQ family. CobQ subfamily.

It functions in the pathway cofactor biosynthesis; adenosylcobalamin biosynthesis. In terms of biological role, catalyzes amidations at positions B, D, E, and G on adenosylcobyrinic A,C-diamide. NH(2) groups are provided by glutamine, and one molecule of ATP is hydrogenolyzed for each amidation. This Paraburkholderia phymatum (strain DSM 17167 / CIP 108236 / LMG 21445 / STM815) (Burkholderia phymatum) protein is Cobyric acid synthase.